The chain runs to 396 residues: Tryptophan synthase beta chain (396 aa).

An N6-(pyridoxal phosphate)lysine modification is found at Lys-86.

The protein belongs to the TrpB family. In terms of assembly, tetramer of two alpha and two beta chains. Pyridoxal 5'-phosphate serves as cofactor.

The catalysed reaction is (1S,2R)-1-C-(indol-3-yl)glycerol 3-phosphate + L-serine = D-glyceraldehyde 3-phosphate + L-tryptophan + H2O. The protein operates within amino-acid biosynthesis; L-tryptophan biosynthesis; L-tryptophan from chorismate: step 5/5. Functionally, the beta subunit is responsible for the synthesis of L-tryptophan from indole and L-serine. In Blochmanniella pennsylvanica (strain BPEN), this protein is Tryptophan synthase beta chain.